Reading from the N-terminus, the 288-residue chain is Prohibitin-2 (288 aa).

Residues 21-43 (GKYAFTGTGLLLALGLAGFAVQT) traverse the membrane as a helical; Signal-anchor for type II membrane protein segment. The AIM signature appears at 125 to 128 (YRTL).

Belongs to the prohibitin family. The mitochondrial prohibitin complex consists of two subunits (phb1 and phb2). The subunits assemble into a membrane-associated ring-shaped supercomplex of approximately 1 mDa.

The protein localises to the mitochondrion inner membrane. Functionally, prohibitin probably acts as a holdase/unfoldase for the stabilization of newly synthesized mitochondrial proteins. Involved in mitophagy; may act as an adapter for atg8 that supports mitophagosome assembly. Negatively regulates the proteolytic processing of atg32 via the i-AAA protease. Acts as a negative regulator of the m-AAA protease. The polypeptide is Prohibitin-2 (phb2) (Schizosaccharomyces pombe (strain 972 / ATCC 24843) (Fission yeast)).